The sequence spans 193 residues: Gas vesicle protein C (193 aa).

Repeats lie at residues 19-51 (VAELSLETREFLSVTTAKRQEQAEKQAQELQAF), 52-84 (YKDLQETSQQFLSETAQARIAQAEKQAQELLAF), 85-117 (HKELQETSQQFLSATAQARIAQAEKQAQELLAF), 118-150 (YQEVRETSQQFLSATAQARIAQAEKQAQELLAF), and 151-183 (HKELQETSQQFLSATADARTAQAKEQKESLLKF). Residues 19–183 (VAELSLETRE…KEQKESLLKF (165 aa)) are 5 X 33 AA tandem repeats.

Belongs to the gas vesicle GvpC family.

Its subcellular location is the gas vesicle. Its function is as follows. Confers stability, involved in shaping gas vesicles (GV), hollow, gas-filled proteinaceous nanostructures. During planktonic growth they allow positioning of the organism at a favorable depth for light or nutrient acquisition. The ratio of GvpA:GvpC is estimated to be 25:1. GvpC strengthens the GV wall, probably by connecting several GvpA proteins in the same and/or adjacent ribs. Removal of GvpC by SDS reduces the critical collapse pressure (CCP) of stored gas vesicles from 0.23 Mpa to 0.08 MPa. Removal of GvpC by urea reduces CCP of freshly isolated GVs from 0.550 MPa to 0.190 MPa; addition of recombinant GvpC restores CCP to 0.508 MPa. As the turgor pressure in this species is usually 0.35 MPa (plus the water column pressure in its growth environment), this protein is essential for GV formation. This chain is Gas vesicle protein C, found in Dolichospermum flosaquae (Anabaena flos-aquae).